The following is a 189-amino-acid chain: Nuclear distribution protein nudE homolog 1 (189 aa).

Residues N4–S121 adopt a coiled-coil conformation. The span at V114–R126 shows a compositional bias: basic and acidic residues. Positions V114 to K139 are disordered.

The protein belongs to the nudE family. As to quaternary structure, self-associates. Interacts with PAC1.

It localises to the nucleus. It is found in the cytoplasm. The protein resides in the cytoskeleton. Required for nuclear migration to the bud neck during cell division. Targets cytoplasmic dynein to microtubule plus ends thereby promoting dynein-mediated microtubule sliding along the bud cortex and consequently the movement of the mitotic spindle to the bud neck. The polypeptide is Nuclear distribution protein nudE homolog 1 (NDL1) (Saccharomyces cerevisiae (strain ATCC 204508 / S288c) (Baker's yeast)).